The chain runs to 868 residues: MFRVLNKVFDNNKRDVERIIQTVVKPVNALEEETMRVENLAEAFMDLRRRVQDGGESLDSLIVPAFALIREAGRRSIGKRHYDTQLIGGAALHQGRIAEMRTGEGKTLVATLALAFNALEGKGCHLVTVNDYLARVGMEEMGLLYRTLGLTVGLANRELSPAEKQAAYACDITYVTNSELGFDYLRDNMAQSKEALVLRADTPLHYAIVDEVDSILIDEARTPLIISGAAEKATDLYYVFAKLIRRLQKGEPAEPGVRTEPTGDYTIEEKSKAVHLTEQGITKIERLLSLKDLYSPENMDKAHMITQAIRARELYHREKDYIVNAEGEVVIVDEFTGRSMPGRRYGEGLHQAIEAKEGVKIENENQTLATITYQNFFRLYDKFAGMTGTAKTEEKEFLDIYGSDVLVIPTNKPVIRVDSDDLIYRTRMGKYAAVVGEVQEMHATGRPILIGTASIETSEQLSSLLQQAGVQHAVLNAKFEAQEASIIAQAGRSGTVTIATNMAGRGTDIMLGGNDEYIIGESIEQQLGVSRYAPEVEAFIKAISREDPAAEQLGMQIPGITLDFIRQAQELHRATVEDRQRVRDLGGLHIVGTERHESRRIDNQLRGRAGRQGDPGSSRFYVSFEDDLMRLFANDRVVGMMDRLGMDDSQPIEAKMVTGAIEKAQARVEDRNFGIRKQLLEFDNVMSKQRDEIYAQRREVLLGPDEDIEETTEGMIGDFVDSQLAAYAPIEVSHEQWDIEQLRSAMVEAVPALETFDFESLRVNSPAEAQDRLLSAVADAFDARKEELSPTMMNSLARYVLLQVVDQHWKEHLHGMDVLRQGIGLRGYGQRDPFTEYKFEATNMFNEMIDALKADVTKFIFRMQFGGA.

Residues Gln85, 103-107 (GEGKT), and Asp508 contribute to the ATP site.

This sequence belongs to the SecA family. Monomer and homodimer. Part of the essential Sec protein translocation apparatus which comprises SecA, SecYEG and auxiliary proteins SecDF. Other proteins may also be involved.

The protein resides in the cell membrane. Its subcellular location is the cytoplasm. It carries out the reaction ATP + H2O + cellular proteinSide 1 = ADP + phosphate + cellular proteinSide 2.. In terms of biological role, part of the Sec protein translocase complex. Interacts with the SecYEG preprotein conducting channel. Has a central role in coupling the hydrolysis of ATP to the transfer of proteins into and across the cell membrane, serving as an ATP-driven molecular motor driving the stepwise translocation of polypeptide chains across the membrane. This is Protein translocase subunit SecA from Deinococcus radiodurans (strain ATCC 13939 / DSM 20539 / JCM 16871 / CCUG 27074 / LMG 4051 / NBRC 15346 / NCIMB 9279 / VKM B-1422 / R1).